The primary structure comprises 119 residues: Albumin-1 (119 aa).

A signal peptide spans 1–19 (MAVFLLATSTIMFPTKIEA). Disulfide bonds link cysteine 22–cysteine 39, cysteine 26–cysteine 41, and cysteine 34–cysteine 51. 2 propeptides span residues 57-64 (LSSVAKMI) and 117-119 (TTK).

Post-translationally, the C-terminal glycine may be removed from A1b.

Functionally, A1b binds to basic 7S globulin (BG) and stimulates its phosphorylation activity. Involved in the signal transduction system to regulate the growth and differentiation as a hormone peptide. This is Albumin-1 from Glycine max (Soybean).